The primary structure comprises 141 residues: MAIERTISIIKPDAVGKNVIGKIYSRFEENGLKIVAAKMKQLTLKEAQEFYAVHKDRPFYAGLVEFMTGGPVMIQVLEGENAVLKNRELMGATNPSEAAEGTIRADFATSVSINAVHGSDSVENAALEIAYFFSQTEICPR.

Lys11, Phe59, Arg87, Thr93, Arg104, and Asn114 together coordinate ATP. His117 (pros-phosphohistidine intermediate) is an active-site residue.

This sequence belongs to the NDK family. Homotetramer. It depends on Mg(2+) as a cofactor.

The protein resides in the cytoplasm. The catalysed reaction is a 2'-deoxyribonucleoside 5'-diphosphate + ATP = a 2'-deoxyribonucleoside 5'-triphosphate + ADP. It catalyses the reaction a ribonucleoside 5'-diphosphate + ATP = a ribonucleoside 5'-triphosphate + ADP. Major role in the synthesis of nucleoside triphosphates other than ATP. The ATP gamma phosphate is transferred to the NDP beta phosphate via a ping-pong mechanism, using a phosphorylated active-site intermediate. The polypeptide is Nucleoside diphosphate kinase (Neisseria meningitidis serogroup A / serotype 4A (strain DSM 15465 / Z2491)).